A 367-amino-acid chain; its full sequence is 2-aminoethylphosphonate--pyruvate transaminase (367 aa).

N6-(pyridoxal phosphate)lysine is present on K193.

The protein belongs to the class-V pyridoxal-phosphate-dependent aminotransferase family. PhnW subfamily. In terms of assembly, homodimer. It depends on pyridoxal 5'-phosphate as a cofactor.

The enzyme catalyses (2-aminoethyl)phosphonate + pyruvate = phosphonoacetaldehyde + L-alanine. In terms of biological role, involved in phosphonate degradation. The chain is 2-aminoethylphosphonate--pyruvate transaminase from Vibrio parahaemolyticus serotype O3:K6 (strain RIMD 2210633).